The following is a 227-amino-acid chain: General transcription factor 3C polypeptide 6 (227 aa).

The tract at residues Asp-157–Ser-227 is disordered. The segment covering Glu-186–Val-195 has biased composition (basic and acidic residues). Residues Glu-203–Ser-227 are compositionally biased toward polar residues.

It belongs to the TFIIIC subunit 6 family. As to quaternary structure, part of the TFIIIC subcomplex TFIIIC2, consisting of six subunits, GTF3C1, GTF3C2, GTF3C3, GTF3C4, GTF3C5 and GTF3C6. Interacts with GTF3C4 and GTF3C5.

It is found in the nucleus. Functionally, involved in RNA polymerase III-mediated transcription. Integral, tightly associated component of the DNA-binding TFIIIC2 subcomplex that directly binds tRNA and virus-associated RNA promoters. In Mus musculus (Mouse), this protein is General transcription factor 3C polypeptide 6.